Here is a 623-residue protein sequence, read N- to C-terminus: MPAVYGSRLTTFEDSEKESEYGYVRKVSGPVVVADGMAGAAMYELVRVGHDNLIGEIIRLEGDSATIQVYEETAGLMVNDPVLRTHKPLSVELGPGILGNIFDGIQRPLKTIAKRSGDVYIPRGVSVPALDKDALWDFQPKKIGEGDLLTGGDLYATVFENSLMQHHVALPPDAMGKITYIAPPGQYSLKDTVLELEFQGVKKQFTMLQTWPVRTPRPVATKLAADTPLLTGQRVLDALFPSVLGGTCAIPGAFGCGKTVISQALSKYSNSDAVVYVGCGERGNEMAEVLMDFPQLTMTLPDGREESVMKRTTLVANTSNMPVAAREASIYTGITIAEYFRDMGYNVSMMADSTSRWAEALREISGRLAEMPADSGYPAYLAARLASFYERAGKVKCLGGPERTGSVTIVGAVSPPGGDFSDPVTSATLSIVQVFWGLDKKLAQRKHFPSVNWLISYSKYSGALESFYEKFDPDFISIRTKAREVLQREDDLNEIVQLVGKDALAETDKITLETAKLLREDYLAQNAFTPYDKFCPFYKSVWMMRNIVHFNALANQAVEKAAGMDGQKITYSLIKHRLGDLFYRLVSQKFEDPAEGEEALVAKFKKLNEDLTAGFRALEDETR.

252–259 (GAFGCGKT) is an ATP binding site.

This sequence belongs to the ATPase alpha/beta chains family. V-ATPase is a heteromultimeric enzyme composed of a peripheral catalytic V1 complex (main components: subunits A, B, C, D, E, and F) attached to an integral membrane V0 proton pore complex (main component: the proteolipid protein).

It catalyses the reaction ATP + H2O + 4 H(+)(in) = ADP + phosphate + 5 H(+)(out). In terms of biological role, catalytic subunit of the peripheral V1 complex of vacuolar ATPase. V-ATPase vacuolar ATPase is responsible for acidifying a variety of intracellular compartments in eukaryotic cells. The chain is V-type proton ATPase catalytic subunit A (CVA69.24) from Gossypium hirsutum (Upland cotton).